A 491-amino-acid chain; its full sequence is Aspartyl/glutamyl-tRNA(Asn/Gln) amidotransferase subunit B (491 aa).

Belongs to the GatB/GatE family. GatB subfamily. As to quaternary structure, heterotrimer of A, B and C subunits.

It carries out the reaction L-glutamyl-tRNA(Gln) + L-glutamine + ATP + H2O = L-glutaminyl-tRNA(Gln) + L-glutamate + ADP + phosphate + H(+). It catalyses the reaction L-aspartyl-tRNA(Asn) + L-glutamine + ATP + H2O = L-asparaginyl-tRNA(Asn) + L-glutamate + ADP + phosphate + 2 H(+). In terms of biological role, allows the formation of correctly charged Asn-tRNA(Asn) or Gln-tRNA(Gln) through the transamidation of misacylated Asp-tRNA(Asn) or Glu-tRNA(Gln) in organisms which lack either or both of asparaginyl-tRNA or glutaminyl-tRNA synthetases. The reaction takes place in the presence of glutamine and ATP through an activated phospho-Asp-tRNA(Asn) or phospho-Glu-tRNA(Gln). This chain is Aspartyl/glutamyl-tRNA(Asn/Gln) amidotransferase subunit B, found in Nostoc sp. (strain PCC 7120 / SAG 25.82 / UTEX 2576).